Consider the following 365-residue polypeptide: Protein RecA (365 aa).

81-88 (GPESSGKT) is an ATP binding site.

Belongs to the RecA family.

It localises to the cytoplasm. Can catalyze the hydrolysis of ATP in the presence of single-stranded DNA, the ATP-dependent uptake of single-stranded DNA by duplex DNA, and the ATP-dependent hybridization of homologous single-stranded DNAs. It interacts with LexA causing its activation and leading to its autocatalytic cleavage. In Borreliella afzelii (strain PKo) (Borrelia afzelii), this protein is Protein RecA.